The sequence spans 212 residues: Pyridoxine/pyridoxamine 5'-phosphate oxidase (212 aa).

Residues 7–10 and K65 contribute to the substrate site; that span reads RRQY. FMN contacts are provided by residues 60–65, 75–76, R81, K82, and Q104; these read RIVLLK and FT. Substrate contacts are provided by Y122, R126, and S130. FMN contacts are provided by residues 139–140 and W184; that span reads QS. 190 to 192 is a substrate binding site; it reads RLH. R194 lines the FMN pocket.

The protein belongs to the pyridoxamine 5'-phosphate oxidase family. In terms of assembly, homodimer. FMN serves as cofactor.

It carries out the reaction pyridoxamine 5'-phosphate + O2 + H2O = pyridoxal 5'-phosphate + H2O2 + NH4(+). It catalyses the reaction pyridoxine 5'-phosphate + O2 = pyridoxal 5'-phosphate + H2O2. The protein operates within cofactor metabolism; pyridoxal 5'-phosphate salvage; pyridoxal 5'-phosphate from pyridoxamine 5'-phosphate: step 1/1. Its pathway is cofactor metabolism; pyridoxal 5'-phosphate salvage; pyridoxal 5'-phosphate from pyridoxine 5'-phosphate: step 1/1. Its function is as follows. Catalyzes the oxidation of either pyridoxine 5'-phosphate (PNP) or pyridoxamine 5'-phosphate (PMP) into pyridoxal 5'-phosphate (PLP). The chain is Pyridoxine/pyridoxamine 5'-phosphate oxidase from Alteromonas mediterranea (strain DSM 17117 / CIP 110805 / LMG 28347 / Deep ecotype).